A 210-amino-acid polypeptide reads, in one-letter code: Protein SYM1 (210 aa).

A run of 4 helical transmembrane segments spans residues 22-39, 68-84, 112-129, and 173-189; these read IMTG…QLLF, AVVY…DRWY, LGFA…MSLL, and LLAA…FLSY.

It belongs to the peroxisomal membrane protein PXMP2/4 family.

Its subcellular location is the mitochondrion inner membrane. Functionally, may be involved in cellular response to stress. Required to maintain mitochondrial DNA (mtDNA) integrity and stability. The protein is Protein SYM1 (SYM1) of Candida glabrata (strain ATCC 2001 / BCRC 20586 / JCM 3761 / NBRC 0622 / NRRL Y-65 / CBS 138) (Yeast).